The chain runs to 281 residues: Tumor necrosis factor ligand superfamily member 6 (281 aa).

At 1–80 (MQQPFNYPYP…LKKRGNHSTG (80 aa)) the chain is on the cytoplasmic side. Positions 20–71 (SSPWAPPGTVLPCPTSVPRRPGQRRPPPPPPPPPLPPPPPPPPLPPLPLPPL) are disordered. Positions 43–70 (RRPPPPPPPPPLPPPPPPPPLPPLPLPP) are enriched in pro residues. The chain crosses the membrane as a helical; Signal-anchor for type II membrane protein span at residues 81 to 102 (LCLLVMFFMVLVALVGLGLGMF). At 103 to 281 (QLFHLQKELA…SQTFFGLYKL (179 aa)) the chain is on the extracellular side. A compositionally biased stretch (polar residues) spans 118–128 (TSQMHTASSLE). The interval 118–142 (TSQMHTASSLEKQIGHPSPPPEKKE) is disordered. Positions 145–281 (KVAHLTGKSN…SQTFFGLYKL (137 aa)) constitute a THD domain. An N-linked (GlcNAc...) asparagine glycan is attached at Asn-184. A disulfide bond links Cys-202 and Cys-233. Residues Asn-250 and Asn-260 are each glycosylated (N-linked (GlcNAc...) asparagine).

It belongs to the tumor necrosis factor family. In terms of assembly, homotrimer. Interacts with ARHGAP9, BAIAP2L1, BTK, CACNB3, CACNB4, CRK, DLG2, DNMBP, DOCK4, EPS8L3, FGR, FYB1, FYN, HCK, ITK, ITSN2, KALRN, LYN, MACC1, MIA, MPP4, MYO15A, NCF1, NCK1, NCK2, NCKIPSD, OSTF1, PIK3R1, PSTPIP1, RIMBP3C, SAMSN1, SH3GL3, SH3PXD2B, SH3PXD2A, SH3RF2, SKAP2, SNX33, SNX9, SORBS3, SPTA1, SRC, SRGAP1, SRGAP2, SRGAP3, TEC, TJP3 and YES1. In terms of processing, the soluble form derives from the membrane form by proteolytic processing. The membrane-bound form undergoes two successive intramembrane proteolytic cleavages. The first one is processed by ADAM10 producing an N-terminal fragment, which lacks the receptor-binding extracellular domain. This ADAM10-processed FasL (FasL APL) remnant form is still membrane anchored and further processed by SPPL2A that liberates the FasL intracellular domain (FasL ICD). FasL shedding by ADAM10 is a prerequisite for subsequent intramembrane cleavage by SPPL2A in T-cells. Post-translationally, N-glycosylated. Glycosylation enhances apoptotic activity. Phosphorylated by FGR on tyrosine residues; this is required for ubiquitination and subsequent internalization. In terms of processing, monoubiquitinated.

The protein resides in the cell membrane. It localises to the cytoplasmic vesicle lumen. It is found in the lysosome lumen. The protein localises to the secreted. Its subcellular location is the nucleus. Functionally, cytokine that binds to TNFRSF6/FAS, a receptor that transduces the apoptotic signal into cells. Involved in cytotoxic T-cell-mediated apoptosis, natural killer cell-mediated apoptosis and in T-cell development. Initiates fratricidal/suicidal activation-induced cell death (AICD) in antigen-activated T-cells contributing to the termination of immune responses. TNFRSF6/FAS-mediated apoptosis also has a role in the induction of peripheral tolerance. Binds to TNFRSF6B/DcR3, a decoy receptor that blocks apoptosis. In terms of biological role, induces FAS-mediated activation of NF-kappa-B, initiating non-apoptotic signaling pathways. Can induce apoptosis but does not appear to be essential for this process. Cytoplasmic form induces gene transcription inhibition. This chain is Tumor necrosis factor ligand superfamily member 6 (FASLG), found in Homo sapiens (Human).